The following is a 447-amino-acid chain: Secretin receptor (447 aa).

The first 28 residues, 1-28, serve as a signal peptide directing secretion; that stretch reads MLSTMSPRLSLLLLWLLLLINAAHPVGA. The Extracellular segment spans residues 29–140; that stretch reads LPRLCDVRRV…NERRHAYLLK (112 aa). Intrachain disulfides connect C46/C74, C65/C106, and C88/C122. N-linked (GlcNAc...) asparagine glycosylation is found at N71, N99, N105, and N127. A helical transmembrane segment spans residues 141–166; sequence LKVMYTVGYSSSLAMLLVALSILCSF. Topologically, residues 167–173 are cytoplasmic; it reads RRLHCTR. A helical transmembrane segment spans residues 174 to 194; that stretch reads NYIHMHLFVSFILRALSNFIK. Residues 195 to 215 are Extracellular-facing; that stretch reads DAVLFPADDVTYCDAHRAGCK. A disulfide bond links C214 and C284. A helical membrane pass occupies residues 216–238; the sequence is LVMIFFQYCIMANYAWLLVEGLY. Residues 239-253 lie on the Cytoplasmic side of the membrane; that stretch reads LHTLLAISFFSERKC. A helical transmembrane segment spans residues 254 to 275; that stretch reads LQAFVLFGWGSPAIFVALWAVT. The Extracellular segment spans residues 276 to 290; it reads RHFLEDFGCWDINSN. N290 carries an N-linked (GlcNAc...) asparagine glycan. A helical transmembrane segment spans residues 291–314; that stretch reads ASIWWVIRGPVILSIVINFIFFIN. Residues 315 to 339 lie on the Cytoplasmic side of the membrane; it reads ILRILMRKLRTQETRGNETHHYKRL. Residues 340 to 355 form a helical membrane-spanning segment; the sequence is AKSTLLLIPLFGIHYI. Residues 356 to 366 are Extracellular-facing; that stretch reads VFAFSPEGAME. A helical membrane pass occupies residues 367 to 390; that stretch reads VQLFFELALGSFQGLVVAVLYCFL. Residues 391–447 are Cytoplasmic-facing; sequence NGELEVQKKWRQWHLQEFPLRPVALSNSFSNATNGPTHSTKAGTSEQSRSIPGANVI. Residues 423-440 show a composition bias toward polar residues; that stretch reads TNGPTHSTKAGTSEQSRS. Positions 423–447 are disordered; it reads TNGPTHSTKAGTSEQSRSIPGANVI.

It belongs to the G-protein coupled receptor 2 family. In terms of processing, phosphorylated on Ser and Thr residues at the cytoplasmic C-terminus by G protein-coupled receptor kinases (GRKs). In brain, expressed in the hippocampal CA1 region, the lower layer of cerebral cortex, the anterior olfactory nuclei, the anterior ventrolateral thalamus, the lateral region of hypothalamus, substantia nigra, tegmental area and central nucleus of the inferior colliculus, the ventral supramamillary nucleus and the cerebellum. Expressed in brown adipocytes: expression predominates in mature brown adipocytes (at protein level). Detected in the renal medulla, where it localized predominantly on the basolateral membranes of cells in the collecting ducts (blue arrow) and the ascending thick segments of the loop of Henle.

The protein localises to the cell membrane. It localises to the basolateral cell membrane. In terms of biological role, g protein-coupled receptor activated by secretin (SCT), which is involved in different processes such as regulation of the pH of the duodenal content, food intake and water homeostasis. Ligand binding causes a conformation change that triggers signaling via guanine nucleotide-binding proteins (G proteins) and activates cAMP-dependent pathway. Upon binding to secretin, regulates the pH of the duodenum by (1) inhibiting the secretion of gastric acid from the parietal cells of the stomach and (2) stimulating the production of bicarbonate (NaHCO(3)) from the ductal cells of the pancreas. In addition to regulating the pH of the duodenal content, plays a central role in diet induced thermogenesis: acts as a non-sympathetic brown fat (BAT) activator mediating prandial thermogenesis, which consequentially induces satiation. Mechanistically, secretin released by the gut after a meal binds to secretin receptor (SCTR) in brown adipocytes, activating brown fat thermogenesis by stimulating lipolysis, which is sensed in the brain and promotes satiation. Also able to stimulate lipolysis in white adipocytes. Also plays an important role in cellular osmoregulation by regulating renal water reabsorption. Also plays a role in the central nervous system: required for synaptic plasticity. In Mus musculus (Mouse), this protein is Secretin receptor.